The sequence spans 492 residues: uncharacterized protein (492 aa).

Belongs to the FGGY kinase family.

This is an uncharacterized protein from Escherichia coli (strain K12).